A 228-amino-acid polypeptide reads, in one-letter code: UPF0173 metal-dependent hydrolase lin1612 (228 aa).

Belongs to the UPF0173 family.

The chain is UPF0173 metal-dependent hydrolase lin1612 from Listeria innocua serovar 6a (strain ATCC BAA-680 / CLIP 11262).